A 256-amino-acid polypeptide reads, in one-letter code: BI1-like protein (256 aa).

The next 7 helical transmembrane spans lie at 53–73, 85–105, 113–133, 138–158, 167–187, 189–209, and 228–248; these read VYGI…VVVL, PGIL…LHIY, LILL…SCAM, IVLQ…AYTF, FSFL…TSFI, MFFP…ALVF, and EYIL…LTIL.

It belongs to the BI1 family.

It is found in the membrane. In Arabidopsis thaliana (Mouse-ear cress), this protein is BI1-like protein.